The chain runs to 455 residues: Probable glycine dehydrogenase (decarboxylating) subunit 1 (455 aa).

The protein belongs to the GcvP family. N-terminal subunit subfamily. In terms of assembly, the glycine cleavage system is composed of four proteins: P, T, L and H. In this organism, the P 'protein' is a heterodimer of two subunits.

The enzyme catalyses N(6)-[(R)-lipoyl]-L-lysyl-[glycine-cleavage complex H protein] + glycine + H(+) = N(6)-[(R)-S(8)-aminomethyldihydrolipoyl]-L-lysyl-[glycine-cleavage complex H protein] + CO2. The glycine cleavage system catalyzes the degradation of glycine. The P protein binds the alpha-amino group of glycine through its pyridoxal phosphate cofactor; CO(2) is released and the remaining methylamine moiety is then transferred to the lipoamide cofactor of the H protein. This is Probable glycine dehydrogenase (decarboxylating) subunit 1 from Saccharolobus islandicus (strain M.16.27) (Sulfolobus islandicus).